The sequence spans 193 residues: Homeobox protein HD-12 (193 aa).

Positions 123–185 form a DNA-binding region, homeobox; TALE-type; that stretch reads SVIRRINFPK…NARRRILPFM (63 aa).

Belongs to the TALE/KNOX homeobox family.

The protein resides in the nucleus. The protein is Homeobox protein HD-12 (HD-12) of Encephalitozoon cuniculi (strain GB-M1) (Microsporidian parasite).